Here is a 280-residue protein sequence, read N- to C-terminus: Ribose-phosphate pyrophosphokinase (280 aa).

ATP is bound by residues 32 to 34 (DGE) and 89 to 90 (RQ). The Mg(2+) site is built by H122 and D160. K183 is a catalytic residue. D-ribose 5-phosphate is bound by residues R185, D209, and 213–217 (STGGT).

Belongs to the ribose-phosphate pyrophosphokinase family. Class III (archaeal) subfamily. The cofactor is Mg(2+).

It localises to the cytoplasm. It carries out the reaction D-ribose 5-phosphate + ATP = 5-phospho-alpha-D-ribose 1-diphosphate + AMP + H(+). It functions in the pathway metabolic intermediate biosynthesis; 5-phospho-alpha-D-ribose 1-diphosphate biosynthesis; 5-phospho-alpha-D-ribose 1-diphosphate from D-ribose 5-phosphate (route I): step 1/1. Activated by Co(2+) and Ni(2+) ions, however Mg(2+) ion shows almost no significant effect on the activity. Equally inhibited by ADP, CTP and GTP, while dTTP and UTP are less inhibitory. Its function is as follows. Involved in the biosynthesis of the central metabolite phospho-alpha-D-ribosyl-1-pyrophosphate (PRPP) via the transfer of pyrophosphoryl group from ATP to 1-hydroxyl of ribose-5-phosphate (Rib-5-P). It can also use CTP and GTP as substrates in addition to ATP. The polypeptide is Ribose-phosphate pyrophosphokinase (Thermococcus kodakarensis (strain ATCC BAA-918 / JCM 12380 / KOD1) (Pyrococcus kodakaraensis (strain KOD1))).